The chain runs to 104 residues: Iron-sulfur cluster assembly protein CyaY (104 aa).

The protein belongs to the frataxin family.

Functionally, involved in iron-sulfur (Fe-S) cluster assembly. May act as a regulator of Fe-S biogenesis. This Vibrio parahaemolyticus serotype O3:K6 (strain RIMD 2210633) protein is Iron-sulfur cluster assembly protein CyaY.